Reading from the N-terminus, the 125-residue chain is SOSS complex subunit C homolog (125 aa).

The disordered stretch occupies residues 43-77 (MPSPQLLGQPTVAPEFLPQGVGLPTNATPPRSAFN). Residues 67–77 (TNATPPRSAFN) are compositionally biased toward polar residues.

This sequence belongs to the SOSS-C family.

In Drosophila persimilis (Fruit fly), this protein is SOSS complex subunit C homolog.